The sequence spans 279 residues: DegV domain-containing protein SpyM3_1149 (279 aa).

Residues 4–278 (IKIVTDSSIT…EGAFAVMVRY (275 aa)) enclose the DegV domain. Hexadecanoate is bound by residues Thr62 and Ser95.

Its function is as follows. May bind long-chain fatty acids, such as palmitate, and may play a role in lipid transport or fatty acid metabolism. This is DegV domain-containing protein SpyM3_1149 from Streptococcus pyogenes serotype M3 (strain ATCC BAA-595 / MGAS315).